A 37-amino-acid polypeptide reads, in one-letter code: Photosystem I reaction center subunit VIII (37 aa).

A helical membrane pass occupies residues 7–27 (LPSFFVPLVGLVFPAIAMASL).

This sequence belongs to the PsaI family.

Its subcellular location is the plastid. It is found in the chloroplast thylakoid membrane. May help in the organization of the PsaL subunit. In Eucalyptus globulus subsp. globulus (Tasmanian blue gum), this protein is Photosystem I reaction center subunit VIII.